The primary structure comprises 267 residues: Eukaryotic translation initiation factor 3 subunit J (267 aa).

The tract at residues 1 to 70 is disordered; that stretch reads MSWNDDDVFA…KDKKSSTDQV (70 aa). Residues 24 to 38 show a composition bias toward acidic residues; sequence WDAEEPIMESWDAEE. The segment covering 39-66 has biased composition (basic and acidic residues); it reads TPAKKETSPKPDSKKNAKKDSKKDKKSS. The stretch at 192 to 220 forms a coiled coil; it reads IESIRQSIATLNVLMKDKEREERRARLAK.

The protein belongs to the eIF-3 subunit J family. In terms of assembly, component of the eukaryotic translation initiation factor 3 (eIF-3) complex.

The protein localises to the cytoplasm. Component of the eukaryotic translation initiation factor 3 (eIF-3) complex, which is involved in protein synthesis of a specialized repertoire of mRNAs and, together with other initiation factors, stimulates binding of mRNA and methionyl-tRNAi to the 40S ribosome. The eIF-3 complex specifically targets and initiates translation of a subset of mRNAs involved in cell proliferation. The protein is Eukaryotic translation initiation factor 3 subunit J of Vanderwaltozyma polyspora (strain ATCC 22028 / DSM 70294 / BCRC 21397 / CBS 2163 / NBRC 10782 / NRRL Y-8283 / UCD 57-17) (Kluyveromyces polysporus).